Reading from the N-terminus, the 221-residue chain is Translation initiation factor 6 (221 aa).

The protein belongs to the eIF-6 family.

Its function is as follows. Binds to the 50S ribosomal subunit and prevents its association with the 30S ribosomal subunit to form the 70S initiation complex. This Nitrosopumilus maritimus (strain SCM1) protein is Translation initiation factor 6.